The chain runs to 76 residues: Repressor protein of division inhibition gene dicB (76 aa).

The DNA-binding element occupies 13-33 (KTKLAQAAGIRLASLYSWKGD).

This protein is a repressor of division inhibition gene dicB. This is Repressor protein of division inhibition gene dicB (dicC) from Escherichia coli (strain K12).